The following is a 634-amino-acid chain: E3 ubiquitin/ISG15 ligase TRIM25 (634 aa).

An RING-type zinc finger spans residues 13-54 (CSVCLELFKEPVTTPCGHNFCMSCLDETWVVQGPPYRCPQCR). T90 is modified (phosphothreonine). The residue at position 99 (S99) is a Phosphoserine. Residue K116 forms a Glycyl lysine isopeptide (Lys-Gly) (interchain with G-Cter in ISG15) linkage. Positions 215–305 (ATKALEDVRS…LIMDKGDEFE (91 aa)) form a coiled coil. An N6-acetyllysine modification is found at K272. Y277 is subject to Phosphotyrosine. The tract at residues 353–437 (KLQKKSEEHN…APKASAAQPD (85 aa)) is disordered. Polar residues predominate over residues 363–376 (GSGNKGDQTQSTFK). The region spanning 444–634 (KVLENFLTKS…AGTTLSICSK (191 aa)) is the B30.2/SPRY domain. An N6-acetyllysine modification is found at K572.

In terms of assembly, forms homodimers. Interacts (via SPRY domain) with RIGI (via CARD domain). Interacts with ZFHX3. Interacts with NLRP12; this interaction reduces the E3 ubiquitin ligase TRIM25-mediated 'Lys-63'-linked RIGI activation. Interacts with the KHDC3L/FILIA-OOEP/FLOPED scaffold complex and BLM at DNA replication forks. Interacts with RTN3; this interaction prevents RIGI ubiquitination. Interacts with YWHAE. Auto-ISGylated. As to expression, ubiquitous.

Its subcellular location is the cytoplasm. It localises to the stress granule. The protein resides in the nucleus. It catalyses the reaction S-ubiquitinyl-[E2 ubiquitin-conjugating enzyme]-L-cysteine + [acceptor protein]-L-lysine = [E2 ubiquitin-conjugating enzyme]-L-cysteine + N(6)-ubiquitinyl-[acceptor protein]-L-lysine.. The catalysed reaction is ATP + [ISG15] + [protein]-lysine = AMP + diphosphate + [protein]-N-ISGyllysine.. It functions in the pathway protein modification; protein ubiquitination. Functionally, functions as a ubiquitin E3 ligase and as an ISG15 E3 ligase. Involved in innate immune defense against viruses by mediating ubiquitination of RIGI and IFIH1. Mediates 'Lys-63'-linked polyubiquitination of the RIGI N-terminal CARD-like region and may play a role in signal transduction that leads to the production of interferons in response to viral infection. Mediates 'Lys-63'-linked polyubiquitination of IFIH1. Promotes ISGylation of 14-3-3 sigma (SFN), an adapter protein implicated in the regulation of a large spectrum signaling pathway. Mediates estrogen action in various target organs. Mediates the ubiquitination and subsequent proteasomal degradation of ZFHX3. Plays a role in promoting the restart of stalled replication forks via interaction with the KHDC3L-OOEP scaffold and subsequent ubiquitination of BLM, resulting in the recruitment and retainment of BLM at DNA replication forks. Plays an essential role in the antiviral activity of ZAP/ZC3HAV1; an antiviral protein which inhibits the replication of certain viruses. Mechanistically, mediates 'Lys-63'-linked polyubiquitination of ZAP/ZC3HAV1 that is required for its optimal binding to target mRNA. Also mediates the ubiquitination of various substrates implicated in stress granule formation, nonsense-mediated mRNA decay, nucleoside synthesis and mRNA translation and stability. The polypeptide is E3 ubiquitin/ISG15 ligase TRIM25 (Trim25) (Mus musculus (Mouse)).